Here is a 129-residue protein sequence, read N- to C-terminus: Fluoride-specific ion channel FluC (129 aa).

3 helical membrane-spanning segments follow: residues 20-40 (WFLG…TLAA), 67-87 (LLII…TAEI), and 96-116 (IMTA…MMLL). Residues Gly-75 and Thr-78 each contribute to the Na(+) site.

The protein belongs to the fluoride channel Fluc/FEX (TC 1.A.43) family.

The protein localises to the cell inner membrane. The enzyme catalyses fluoride(in) = fluoride(out). With respect to regulation, na(+) is not transported, but it plays an essential structural role and its presence is essential for fluoride channel function. Functionally, fluoride-specific ion channel. Important for reducing fluoride concentration in the cell, thus reducing its toxicity. The chain is Fluoride-specific ion channel FluC from Desulfovibrio desulfuricans (strain ATCC 27774 / DSM 6949 / MB).